The chain runs to 245 residues: 8-amino-3,8-dideoxy-manno-octulosonate cytidylyltransferase (245 aa).

This sequence belongs to the KdsB family.

It is found in the cytoplasm. It carries out the reaction 8-amino-3,8-dideoxy-alpha-D-manno-octulosonate + CTP = CMP-8-amino-3,8-dideoxy-alpha-D-manno-oct-2-ulosonate + diphosphate. It functions in the pathway bacterial outer membrane biogenesis; lipopolysaccharide biosynthesis. Its function is as follows. Activates KDO8N (a required 8-carbon sugar) for incorporation into bacterial lipopolysaccharide in the Shewanella genus. This is 8-amino-3,8-dideoxy-manno-octulosonate cytidylyltransferase from Shewanella piezotolerans (strain WP3 / JCM 13877).